Here is a 263-residue protein sequence, read N- to C-terminus: NADH dehydrogenase [ubiquinone] iron-sulfur protein 3, mitochondrial (263 aa).

A mitochondrion-targeting transit peptide spans 1-35 (MVAAVARLWWRGLLGASALTRGAGRPSVLLLPVRR).

The protein belongs to the complex I 30 kDa subunit family. Core subunit of respiratory chain NADH dehydrogenase (Complex I) which is composed of 45 different subunits. Interacts with NDUFAF3. Interacts with RAB5IF. Found in subcomplexes containing subunits NDUFS2, MT-ND1 and NDUFA13.

The protein localises to the mitochondrion inner membrane. The enzyme catalyses a ubiquinone + NADH + 5 H(+)(in) = a ubiquinol + NAD(+) + 4 H(+)(out). Functionally, core subunit of the mitochondrial membrane respiratory chain NADH dehydrogenase (Complex I) which catalyzes electron transfer from NADH through the respiratory chain, using ubiquinone as an electron acceptor. Essential for the catalytic activity and assembly of complex I. In Pongo pygmaeus (Bornean orangutan), this protein is NADH dehydrogenase [ubiquinone] iron-sulfur protein 3, mitochondrial (NDUFS3).